We begin with the raw amino-acid sequence, 129 residues long: MKSVQFCFLFCCWRATCCRSCELTNITITVEKEECSFCISINTTWCAGYCYTRDLVYRDPARPNIQKTCTFKELVYETVRVPGCAHRADSLHTYPVATACHCGKCDSGSTDCTVRGLGPSYCSFSDIRE.

The signal sequence occupies residues 1–18 (MKSVQFCFLFCCWRATCC). Cystine bridges form between cysteine 21–cysteine 69, cysteine 35–cysteine 84, cysteine 38–cysteine 122, cysteine 46–cysteine 100, cysteine 50–cysteine 102, and cysteine 105–cysteine 112. Asparagine 25 and asparagine 42 each carry an N-linked (GlcNAc...) asparagine glycan.

The protein belongs to the glycoprotein hormones subunit beta family. Heterodimer. The active follitropin is a heterodimer composed of an alpha chain/CGA shared with other hormones and a unique beta chain/FSHB shown here.

The protein localises to the secreted. Its function is as follows. Together with the alpha chain CGA constitutes follitropin, the follicle-stimulating hormone, and provides its biological specificity to the hormone heterodimer. Binds FSHR, a G protein-coupled receptor, on target cells to activate downstream signaling pathways. Follitropin is involved in follicle development and spermatogenesis in reproductive organs. The sequence is that of Follitropin subunit beta (FSHB) from Cervus nippon (Sika deer).